The sequence spans 67 residues: Cell division protein ZapB (67 aa).

A coiled-coil region spans residues 3–59 (LELLSKLETKIQTALETIELLKMELEEEKQKSIGLAEQNQQLSQDLNSWNEKVTGLV).

It belongs to the ZapB family. As to quaternary structure, homodimer. The ends of the coiled-coil dimer bind to each other, forming polymers. Interacts with FtsZ.

Its subcellular location is the cytoplasm. Functionally, non-essential, abundant cell division factor that is required for proper Z-ring formation. It is recruited early to the divisome by direct interaction with FtsZ, stimulating Z-ring assembly and thereby promoting cell division earlier in the cell cycle. Its recruitment to the Z-ring requires functional FtsA or ZipA. The protein is Cell division protein ZapB of Shewanella woodyi (strain ATCC 51908 / MS32).